Here is a 300-residue protein sequence, read N- to C-terminus: U1 small nuclear ribonucleoprotein 70 kDa homolog (300 aa).

Residues 107–198 (RTIFIGRLPY…RTVKYFKPRR (92 aa)) enclose the RRM domain. Disordered stretches follow at residues 204 to 248 (GGRG…AYSA) and 263 to 300 (NRPLLSAATPTAAVTSVYKSRNSRTRESQPAPKEAPDY). Low complexity predominate over residues 265–279 (PLLSAATPTAAVTSV).

As to quaternary structure, component of the spliceosome, where it is associated with snRNP U1. Binds stem loop I of U1 snRNA. Interacts with mRNA.

The protein resides in the nucleus. Functionally, involved in nuclear mRNA splicing. This chain is U1 small nuclear ribonucleoprotein 70 kDa homolog (SNP1), found in Saccharomyces cerevisiae (strain ATCC 204508 / S288c) (Baker's yeast).